Reading from the N-terminus, the 272-residue chain is Magnetosome protein MamQ 1 (272 aa).

Residues 1–46 (MALGDANVGSAPGVDFSALQRVKQSEELLAQLYVVEETPRRLGRGP) are Cytoplasmic-facing. A helical transmembrane segment spans residues 47 to 67 (VHALMVISVLSVVAFIATLLM). Over 68–272 (RYNTFVTMSE…PLNHAQDIKK (205 aa)) the chain is Lumenal.

The protein belongs to the LemA family.

The protein localises to the magnetosome membrane. Functionally, essential for magnetosome formation. Can be used to induce magnetosome formation. The polypeptide is Magnetosome protein MamQ 1 (mamQ1) (Paramagnetospirillum magneticum (strain ATCC 700264 / AMB-1) (Magnetospirillum magneticum)).